Here is a 65-residue protein sequence, read N- to C-terminus: MKKDIHPAYQQIDVHCVCGNKFKTGSTNKEIRVEVCSDCHPFYTGKQKSVEKGGRVEKFKKKFGM.

4 residues coordinate Zn(2+): cysteine 16, cysteine 18, cysteine 36, and cysteine 39.

Belongs to the bacterial ribosomal protein bL31 family. Type A subfamily. As to quaternary structure, part of the 50S ribosomal subunit. Zn(2+) serves as cofactor.

Its function is as follows. Binds the 23S rRNA. This is Large ribosomal subunit protein bL31 from Alkaliphilus metalliredigens (strain QYMF).